The following is a 564-amino-acid chain: MTDSVSKAVARTIRAPHGSELHCANWLIEAAYRMIQNNLDPDVAERPEDLVVYGGIGKAARNWACFEQILRSLQALQPEETLLVQSGKPVGVFRTHADAPRVLIANSNLVPHWATWDHFHELDKAGLMMYGQMTAGSWIYIGAQGIVQGTFETFVEAGRKHYNGDLTGKWILTAGLGGMGGAQPLAGVLAGACVLAVECQESRIDFRLRTRYLDHKAFSVDEALAIIDKACKEKRAISVGLLGNAAEILPELVQRAKAGGMKPDIVTDQTSAHDPINGYLPAGWDLARWESSRQSDPKAVEKAARASMAVHVQAMLDFCHMGIPTVDYGNNIRQVALDEGVKNAFDFPGFVPAYIRPLFCEGKGPFRWVALSGDPEDIYKTDAKLKALFPEHTNLHRWLDMAQERIAFQGLPARICWLGLGERHLAGLAFNEMVRNGELKAPVVIGRDHLDCGSVASPNRETEAMMDGSDAVSDWPLLNALLNTAGGATWVSLHHGGGVGMGFSQHAGVVIVADGTAEADARLSRVLWNDPATGVMRHADAGYEVARDCARRHELTLPMAKELP.

Residues 54-55 (GG), Q132, 178-180 (GMG), E198, R203, 244-245 (NA), 269-273 (QTSAH), 279-280 (YL), and Y328 contribute to the NAD(+) site. C416 is a catalytic residue. NAD(+) is bound at residue G498.

This sequence belongs to the urocanase family. Homodimer. It depends on NAD(+) as a cofactor.

It carries out the reaction 4-imidazolone-5-propanoate = trans-urocanate + H2O. It participates in amino-acid degradation; L-histidine degradation into L-glutamate; N-formimidoyl-L-glutamate from L-histidine: step 2/3. The chain is Urocanate hydratase from Trifolium repens (Creeping white clover).